We begin with the raw amino-acid sequence, 188 residues long: Ribosome-recycling factor (188 aa).

Belongs to the RRF family.

Its subcellular location is the cytoplasm. Functionally, responsible for the release of ribosomes from messenger RNA at the termination of protein biosynthesis. May increase the efficiency of translation by recycling ribosomes from one round of translation to another. The chain is Ribosome-recycling factor from Cereibacter sphaeroides (strain ATCC 17029 / ATH 2.4.9) (Rhodobacter sphaeroides).